A 102-amino-acid chain; its full sequence is Salivary protein Salp9 (102 aa).

Residues 1–21 (MGLTEIMLVLVSLAFVATAAA) form the signal peptide. Residues N26 and N87 are each glycosylated (N-linked (GlcNAc...) asparagine). The segment at 83-102 (SGVPNDTDAKIEETEEELEA) is disordered.

Belongs to the salp14 family. As to expression, salivary gland (at protein level). Saliva (at protein level). Midgut.

It is found in the secreted. Its function is as follows. Salivary protein that facilitates blood feeding of adult ticks on vertebrate species. Inhibits the lectin pathway of complement system activation in the host. The polypeptide is Salivary protein Salp9 (Ixodes scapularis (Black-legged tick)).